Consider the following 259-residue polypeptide: MLEKVKHIILVLSGKGGVGKSTVSTQLALTLSESKFKVGLLDIDLCGPSVPYLLGLEGHDVHQCEEGWVPVYTNADKNLAVMSIGFLLKNRTDAVIWRGPKKTAMIKQFLEDVAWEDLDYLIIDTPPGTSDEHITVMECLKAVNADGAIIVTTPQEMALEDVRKEVTFCKKTGINIIGIVENMSGFVCPNCTECTNIFSSGGGVALAELAKVPHLGTLPIDPRVGALAGSGKACVKELPDCTTSKILQSIADNISAEKS.

Residue G14–S21 participates in ATP binding. C188 and C191 together coordinate [4Fe-4S] cluster.

Belongs to the Mrp/NBP35 ATP-binding proteins family. NUBP2/CFD1 subfamily. Heterotetramer of 2 Nubp1 and 2 Nubp2 chains. It depends on [4Fe-4S] cluster as a cofactor.

The protein localises to the cytoplasm. Its function is as follows. Component of the cytosolic iron-sulfur (Fe/S) protein assembly (CIA) machinery. Required for maturation of extramitochondrial Fe-S proteins. The Nubp1-Nubp2 heterotetramer forms a Fe-S scaffold complex, mediating the de novo assembly of an Fe-S cluster and its transfer to target apoproteins. The sequence is that of Cytosolic Fe-S cluster assembly factor Nubp2 homolog from Aedes aegypti (Yellowfever mosquito).